Reading from the N-terminus, the 699-residue chain is Polyribonucleotide nucleotidyltransferase (699 aa).

The Mg(2+) site is built by Asp485 and Asp491. One can recognise a KH domain in the interval 552–611 (PRITVIKINPEKIRDVIGKGGAVIRALTEETGTTIELEDDGTVKIASSNGEATKEAIRRI). One can recognise an S1 motif domain in the interval 621-689 (GRIYNGKVIR…RQGRVRLSIK (69 aa)).

This sequence belongs to the polyribonucleotide nucleotidyltransferase family. In terms of assembly, component of the RNA degradosome, which is a multiprotein complex involved in RNA processing and mRNA degradation. It depends on Mg(2+) as a cofactor.

The protein resides in the cytoplasm. The catalysed reaction is RNA(n+1) + phosphate = RNA(n) + a ribonucleoside 5'-diphosphate. Functionally, involved in mRNA degradation. Catalyzes the phosphorolysis of single-stranded polyribonucleotides processively in the 3'- to 5'-direction. This is Polyribonucleotide nucleotidyltransferase from Shewanella baltica (strain OS223).